The following is a 417-amino-acid chain: Gamma-glutamyl phosphate reductase (417 aa).

It belongs to the gamma-glutamyl phosphate reductase family.

Its subcellular location is the cytoplasm. It catalyses the reaction L-glutamate 5-semialdehyde + phosphate + NADP(+) = L-glutamyl 5-phosphate + NADPH + H(+). It participates in amino-acid biosynthesis; L-proline biosynthesis; L-glutamate 5-semialdehyde from L-glutamate: step 2/2. Catalyzes the NADPH-dependent reduction of L-glutamate 5-phosphate into L-glutamate 5-semialdehyde and phosphate. The product spontaneously undergoes cyclization to form 1-pyrroline-5-carboxylate. This Escherichia coli O17:K52:H18 (strain UMN026 / ExPEC) protein is Gamma-glutamyl phosphate reductase.